Reading from the N-terminus, the 201-residue chain is Lipoprotein signal peptidase (201 aa).

Helical transmembrane passes span S73–I93 and T97–D117. Residues D126 and D144 contribute to the active site. Residues Y135–I155 traverse the membrane as a helical segment.

Belongs to the peptidase A8 family.

It is found in the cell inner membrane. It carries out the reaction Release of signal peptides from bacterial membrane prolipoproteins. Hydrolyzes -Xaa-Yaa-Zaa-|-(S,diacylglyceryl)Cys-, in which Xaa is hydrophobic (preferably Leu), and Yaa (Ala or Ser) and Zaa (Gly or Ala) have small, neutral side chains.. It participates in protein modification; lipoprotein biosynthesis (signal peptide cleavage). This protein specifically catalyzes the removal of signal peptides from prolipoproteins. The polypeptide is Lipoprotein signal peptidase (Rickettsia africae (strain ESF-5)).